The sequence spans 410 residues: SPbeta prophage-derived uncharacterized protein YonV (410 aa).

The polypeptide is SPbeta prophage-derived uncharacterized protein YonV (yonV) (Bacillus subtilis (strain 168)).